Consider the following 432-residue polypeptide: Glutamyl-tRNA reductase (432 aa).

Residues 49–52, Ser101, 106–108, and Gln112 each bind substrate; these read TCNR and ESQ. Cys50 serves as the catalytic Nucleophile. Residue 181–186 coordinates NADP(+); it reads GTGETI. The segment at 410–432 is disordered; it reads KPGYHHPTLQTTIVKTDETDPAS.

It belongs to the glutamyl-tRNA reductase family. As to quaternary structure, homodimer.

It catalyses the reaction (S)-4-amino-5-oxopentanoate + tRNA(Glu) + NADP(+) = L-glutamyl-tRNA(Glu) + NADPH + H(+). It participates in porphyrin-containing compound metabolism; protoporphyrin-IX biosynthesis; 5-aminolevulinate from L-glutamyl-tRNA(Glu): step 1/2. Catalyzes the NADPH-dependent reduction of glutamyl-tRNA(Glu) to glutamate 1-semialdehyde (GSA). In Xylella fastidiosa (strain 9a5c), this protein is Glutamyl-tRNA reductase.